The sequence spans 137 residues: MKDKMWCEDTAQPHRRLPAPPSSSSPTVVFQSHRRLLAPPSSSWTLWVAPRCGCCSPLCPKRVCASLCRVLAVTWSLTKLPFPLSPILLSRPGWLPQPSSPGPACAEPSSQEGGDTDLRSYGCFVCGWAWPTLSPRP.

Residues 1-26 form a disordered region; that stretch reads MKDKMWCEDTAQPHRRLPAPPSSSSP.

This is an uncharacterized protein from Homo sapiens (Human).